A 417-amino-acid polypeptide reads, in one-letter code: Spermidine/putrescine import ATP-binding protein PotA (417 aa).

Positions 5-308 constitute an ABC transporter domain; the sequence is IILKDLTKVF…PANRFVAQFV (304 aa). 37-44 provides a ligand contact to ATP; the sequence is GPSGCGKT. An insert region spans residues 105-177; sequence DFNSKIKDNL…TALKCKKINK (73 aa).

It belongs to the ABC transporter superfamily. Spermidine/putrescine importer (TC 3.A.1.11.1) family. In terms of assembly, the complex is composed of two ATP-binding proteins (PotA), two transmembrane proteins (PotB and PotC) and a solute-binding protein (PotD).

The protein resides in the cell membrane. It catalyses the reaction ATP + H2O + polyamine-[polyamine-binding protein]Side 1 = ADP + phosphate + polyamineSide 2 + [polyamine-binding protein]Side 1.. Its function is as follows. Part of the ABC transporter complex PotABCD involved in spermidine/putrescine import. Responsible for energy coupling to the transport system. The protein is Spermidine/putrescine import ATP-binding protein PotA of Aster yellows witches'-broom phytoplasma (strain AYWB).